A 1286-amino-acid polypeptide reads, in one-letter code: X-linked retinitis pigmentosa GTPase regulator-interacting protein 1 (1286 aa).

The disordered stretch occupies residues 144–193 (QVGHRQLHTAGAPVPEKPKRGPRDRLSYTAPPSFKEHATNENRGEVASKP). Basic and acidic residues-rich tracts occupy residues 159–169 (EKPKRGPRDRL) and 177–189 (FKEH…RGEV). A coiled-coil region spans residues 294–584 (KAQLTEVQEA…LEGILRSHDL (291 aa)). Residues 781 to 906 (GGRKAQEEEF…AKNESIKGDF (126 aa)) enclose the C2 domain. Disordered regions lie at residues 934–1008 (SFLK…RKHG) and 1058–1108 (EEEE…PMSQ). Composition is skewed to basic and acidic residues over residues 940–960 (AQTK…EEKA), 988–998 (HGGERKEKEHQ), and 1070–1084 (KQKE…KESS). Over residues 1085-1096 (EQGSEVSEAQTT) the composition is skewed to polar residues. The tract at residues 1091-1281 (SEAQTTDSDD…VLHAIYKEMT (191 aa)) is interaction with RPGR.

This sequence belongs to the RPGRIP1 family. Forms homodimers and elongated homopolymers. Interacts with RPGR. Interacts with NPHP4. Interacts with NEK4. Interacts with SPATA7. Interacts with CEP290/NPHP6; mediating the association between RPGR and CEP290/NPHP6. Strong expression in retina, with weaker expression in testis. Expressed in other neurons such as amacrine cells. Colocalizes with RGPR in the outer segment of rod photoreceptors and cone outer segments.

The protein localises to the cell projection. The protein resides in the cilium. In terms of biological role, may function as scaffolding protein. Required for normal location of RPGR at the connecting cilium of photoreceptor cells. Required for normal disk morphogenesis and disk organization in the outer segment of photoreceptor cells and for survival of photoreceptor cells. This chain is X-linked retinitis pigmentosa GTPase regulator-interacting protein 1 (RPGRIP1), found in Homo sapiens (Human).